Here is a 308-residue protein sequence, read N- to C-terminus: Putative S-adenosyl-L-methionine-dependent methyltransferase Mmcs_1045 (308 aa).

S-adenosyl-L-methionine contacts are provided by residues Asp133 and 162 to 163; that span reads DL.

This sequence belongs to the UPF0677 family.

Exhibits S-adenosyl-L-methionine-dependent methyltransferase activity. The sequence is that of Putative S-adenosyl-L-methionine-dependent methyltransferase Mmcs_1045 from Mycobacterium sp. (strain MCS).